A 330-amino-acid polypeptide reads, in one-letter code: MTPNSTGEVPGPIPRGALELSLALASLIIAANLLLALGIACDRRLRSPPAGCFFLSLLLAGLLTGLALPTLPGLWRQSHRGYWSCLLVYLAPNFSFLSLLANLLLVHGERYVAVLRPLQPPGSIRLALLLTWTGPLLFASLPALGWNHWGPEANCSSQTIFPAPYLYLEVYGLLLPAVGAAALLSAHVLLAAHRQLQDIRRLERAVCRDAPSALARALTWRQARAQAGATLLFGLCWGPYVATLFLSVLAYEQRPPLGPGTLLSLLSLGSASAAAVPVAMGLGDHRYTAPWRAAARRWLRGLRGRGSQASPGPSTAYHTSSQSSVDVDLN.

The Extracellular segment spans residues 1-19; sequence MTPNSTGEVPGPIPRGALE. Asn-4 carries N-linked (GlcNAc...) asparagine glycosylation. The chain crosses the membrane as a helical span at residues 20–40; it reads LSLALASLIIAANLLLALGIA. The Cytoplasmic portion of the chain corresponds to 41–50; the sequence is CDRRLRSPPA. Residues 51-71 form a helical membrane-spanning segment; sequence GCFFLSLLLAGLLTGLALPTL. Residues 72–85 are Extracellular-facing; that stretch reads PGLWRQSHRGYWSC. A disulfide bridge links Cys-85 with Cys-155. A helical transmembrane segment spans residues 86–106; that stretch reads LLVYLAPNFSFLSLLANLLLV. Residues 107-125 lie on the Cytoplasmic side of the membrane; the sequence is HGERYVAVLRPLQPPGSIR. Residues 126–146 form a helical membrane-spanning segment; it reads LALLLTWTGPLLFASLPALGW. The Extracellular portion of the chain corresponds to 147 to 169; the sequence is NHWGPEANCSSQTIFPAPYLYLE. The N-linked (GlcNAc...) asparagine glycan is linked to Asn-154. A helical transmembrane segment spans residues 170–190; that stretch reads VYGLLLPAVGAAALLSAHVLL. Residues 191–230 are Cytoplasmic-facing; that stretch reads AAHRQLQDIRRLERAVCRDAPSALARALTWRQARAQAGAT. The helical transmembrane segment at 231-251 threads the bilayer; sequence LLFGLCWGPYVATLFLSVLAY. Over 252-261 the chain is Extracellular; the sequence is EQRPPLGPGT. Residues 262-282 traverse the membrane as a helical segment; that stretch reads LLSLLSLGSASAAAVPVAMGL. At 283–330 the chain is on the cytoplasmic side; that stretch reads GDHRYTAPWRAAARRWLRGLRGRGSQASPGPSTAYHTSSQSSVDVDLN. The tract at residues 304 to 330 is disordered; it reads GRGSQASPGPSTAYHTSSQSSVDVDLN. The span at 307-330 shows a compositional bias: polar residues; that stretch reads SQASPGPSTAYHTSSQSSVDVDLN.

This sequence belongs to the G-protein coupled receptor 1 family. In terms of tissue distribution, expressed at high level in spleen. Expressed at lower level in thymus, heart, lung, liver, kidney, ileum, blood and adherent alveolar macrophage cells.

Its subcellular location is the cell membrane. Receptor for bile acid. Bile-acid binding induces its internalization, activation of extracellular signal-regulated kinase and intracellular cAMP production. May be involved in the suppression of macrophage functions by bile acids. Involved in bile acid promoted GLP1R secretion. This is G-protein coupled bile acid receptor 1 (GPBAR1) from Oryctolagus cuniculus (Rabbit).